A 734-amino-acid polypeptide reads, in one-letter code: Photosystem I P700 chlorophyll a apoprotein A2 (734 aa).

Transmembrane regions (helical) follow at residues 46–69 (IFAS…FHVA), 135–158 (LYTG…LHLQ), 175–199 (LNHH…HVAI), 273–291 (IAHH…GHMY), 330–353 (IHFQ…QHMY), 369–395 (AALY…IFFI), 417–439 (AIIS…LYVH), and 517–535 (FLVH…LILV). 2 residues coordinate [4Fe-4S] cluster: Cys-559 and Cys-568. 2 helical membrane passes run 575–596 (AFYL…YWHW) and 643–665 (LSVW…MFLI). The chlorophyll a site is built by His-654, Met-662, and Tyr-670. Trp-671 contributes to the phylloquinone binding site. A helical transmembrane segment spans residues 707–727 (LVGLAHFSVGYIFTYAAFLIA).

It belongs to the PsaA/PsaB family. The PsaA/B heterodimer binds the P700 chlorophyll special pair and subsequent electron acceptors. PSI consists of a core antenna complex that captures photons, and an electron transfer chain that converts photonic excitation into a charge separation. The eukaryotic PSI reaction center is composed of at least 11 subunits. P700 is a chlorophyll a/chlorophyll a' dimer, A0 is one or more chlorophyll a, A1 is one or both phylloquinones and FX is a shared 4Fe-4S iron-sulfur center. is required as a cofactor.

Its subcellular location is the plastid. It is found in the chloroplast thylakoid membrane. The enzyme catalyses reduced [plastocyanin] + hnu + oxidized [2Fe-2S]-[ferredoxin] = oxidized [plastocyanin] + reduced [2Fe-2S]-[ferredoxin]. Its function is as follows. PsaA and PsaB bind P700, the primary electron donor of photosystem I (PSI), as well as the electron acceptors A0, A1 and FX. PSI is a plastocyanin-ferredoxin oxidoreductase, converting photonic excitation into a charge separation, which transfers an electron from the donor P700 chlorophyll pair to the spectroscopically characterized acceptors A0, A1, FX, FA and FB in turn. Oxidized P700 is reduced on the lumenal side of the thylakoid membrane by plastocyanin. The protein is Photosystem I P700 chlorophyll a apoprotein A2 of Nymphaea alba (White water-lily).